The following is a 568-amino-acid chain: Phosphoprotein (568 aa).

2 disordered regions span residues 1–23 (MDQD…GGRE) and 38–320 (SEPT…GIGE). Residues 7–20 (ILKEDSEVEREAPG) show a composition bias toward basic and acidic residues. An N0 binding region spans residues 33–41 (DAVLSSEPT). Residues 50–59 (LHNTINTPQG) are compositionally biased toward polar residues. S68 carries the post-translational modification Phosphoserine; by host. Basic and acidic residues predominate over residues 83–101 (RSGEESRVSGRTSKPEAEA). S125 bears the Phosphoserine; by host mark. A compositionally biased stretch (basic and acidic residues) spans 150–168 (GIEDENREMAAHPDKRGED). Residues 191 to 206 (ASNNGRSMEPGSSHSA) are compositionally biased toward polar residues. 4 positions are modified to phosphoserine; by host: S192, S249, S257, and S260. 2 multimerization regions span residues 344–411 (FESS…KRFS) and 362–432 (ANYA…HIIT). The segment at 345-412 (ESSRDASYVF…FRDIYKRFSE (68 aa)) is bipartite nucleocapsid binding domain 1. The stretch at 364 to 429 (YAEMTFNVCG…LLMSNLSTLH (66 aa)) forms a coiled coil. L protein binding regions lie at residues 412-445 (EYQK…DSLT) and 413-445 (YQKE…DSLT). Residues S447 and S449 each carry the phosphoserine; by host modification. The tract at residues 479 to 568 (DLIREDEFRD…VEEDIESLTN (90 aa)) is bipartite nucleocapsid binding domain 2. An interaction with the nucleocapsid (N-RNA) region spans residues 479–568 (DLIREDEFRD…VEEDIESLTN (90 aa)). The interval 495–516 (YQERDTEPRASNASRLLPSKEK) is disordered. The interval 547–566 (KTDQEVKAVMELVEEDIESL) is formation of N-RNA complex involved in transcription and replication.

The protein belongs to the respirovirus P protein family. Homotetramer. Interacts (via multimerization domain) with polymerase L; this interaction forms the polymerase complex. Interacts (via N-terminus) with N0; this interaction allows P to chaperon N0 before encapsidation and form the N-P complex. Interacts (via C-terminus) with N-RNA template; this interaction positions the polymerase on the template. Post-translationally, phosphorylated by PKC/PRKCZ, and other unknown kinases. Phosphorylation is necessary for viral transcription and replication. The N-terminus contains the majority of phosphorylated sites. Ser-249 is the major site of phosphorylation, but is not necessary for most functions.

It is found in the host cytoplasm. Functionally, essential cofactor of the RNA polymerase L that plays a central role in the transcription and replication by forming the polymerase complex with RNA polymerase L and recruiting L to the genomic N-RNA template for RNA synthesis. Also plays a central role in the encapsidation of nascent RNA chains by forming the encapsidation complex with the nucleocapsid protein N (N-P complex). Acts as a chaperone for newly synthesized free N protein, so-called N0, allowing encapsidation of nascent RNA chains during replication. The nucleoprotein protein N prevents excessive phosphorylation of P, which leads to down-regulation of viral transcription/ replication. Participates, together with N, in the formation of viral factories (viroplasms), which are large inclusions in the host cytoplasm where replication takes place. Recruits host PI4KB and remodel the host endoplasmic reticulum membrane to form viral replication factories. This chain is Phosphoprotein (P/V/C), found in Sendai virus (strain Fushimi) (SeV).